The chain runs to 100 residues: Cystatin-B (100 aa).

One can recognise a Cystatin domain in the interval 6-88 (GGISAPLDAD…GGGLELSGMQ (83 aa)). The Secondary area of contact motif lies at 48–52 (QIVSG).

This sequence belongs to the cystatin family. As to expression, widely expressed. Highly expressed in liver and to a lesser extent in spleen, gill, brain, intestine, kidney, head kidney and blood. Lowest level in muscle.

The protein resides in the cytoplasm. Its function is as follows. Thiol protease inhibitor. Has papain inhibitory activity in vitro. May be involved in immune responses against invading Gram-negative bacteria. The sequence is that of Cystatin-B from Oplegnathus fasciatus (Barred knifejaw).